The primary structure comprises 239 residues: Phosphoribosylaminoimidazole-succinocarboxamide synthase (239 aa).

Belongs to the SAICAR synthetase family.

The enzyme catalyses 5-amino-1-(5-phospho-D-ribosyl)imidazole-4-carboxylate + L-aspartate + ATP = (2S)-2-[5-amino-1-(5-phospho-beta-D-ribosyl)imidazole-4-carboxamido]succinate + ADP + phosphate + 2 H(+). It functions in the pathway purine metabolism; IMP biosynthesis via de novo pathway; 5-amino-1-(5-phospho-D-ribosyl)imidazole-4-carboxamide from 5-amino-1-(5-phospho-D-ribosyl)imidazole-4-carboxylate: step 1/2. The sequence is that of Phosphoribosylaminoimidazole-succinocarboxamide synthase from Bacillus cereus (strain B4264).